The sequence spans 525 residues: Ribosomal protein S6 kinase beta-1 (525 aa).

The disordered stretch occupies residues 1–54; the sequence is MRRRRRRDGFYPAPDFRDREAEDMAGVFDIDLDQPEDAGSEDELEEGGQLNESM. A TOS motif motif is present at residues 28–32; it reads FDIDL. Residues 30–46 are compositionally biased toward acidic residues; it reads IDLDQPEDAGSEDELEE. The Protein kinase domain occupies 91–352; sequence FELLRVLGKG…AGEVQAHPFF (262 aa). ATP contacts are provided by residues 97 to 105 and Lys123; that span reads LGKGGYGKV. Asp218 serves as the catalytic Proton acceptor. Thr252 is subject to Phosphothreonine; by PDPK1. Positions 353 to 423 constitute an AGC-kinase C-terminal domain; that stretch reads RHINWEELLA…VAPSVLESVK (71 aa). The segment at 380–399 is disordered; that stretch reads SQFDSKFTRQTPVDSPDDST. Over residues 381-399 the composition is skewed to polar residues; it reads QFDSKFTRQTPVDSPDDST. Phosphoserine is present on Ser394. The residue at position 412 (Thr412) is a Phosphothreonine; by MTOR, NEK6 and NEK7. Positions 424–525 are autoinhibitory domain; the sequence is EKFSFEPKIR…KRPEHLRMNL (102 aa). Phosphoserine is present on residues Ser434 and Ser441. Thr444 bears the Phosphothreonine mark. Ser447 and Ser452 each carry phosphoserine. An N6-acetyllysine modification is found at Lys516.

This sequence belongs to the protein kinase superfamily. AGC Ser/Thr protein kinase family. S6 kinase subfamily. As to quaternary structure, interacts with PPP1R9A/neurabin-1. Interacts with RPTOR. Interacts with IRS1. Interacts with EIF3B and EIF3C. Interacts with TRAF4. Interacts with POLDIP3. Interacts (via N-terminus) with IER5. In terms of assembly, (Microbial infection) Interacts with Mumps virus phosphoprotein; this interaction may play a role in the viral replication and transcription. In terms of processing, phosphorylation at Thr-412 is regulated by mTORC1. The phosphorylation at this site is maintained by an agonist-dependent autophosphorylation mechanism. Activated by phosphorylation at Thr-252 by PDPK1. Dephosphorylation by PPP1CC at Thr-412 in mitochondrion. Widely expressed.

Its subcellular location is the synapse. The protein localises to the synaptosome. The protein resides in the mitochondrion outer membrane. It localises to the mitochondrion. It is found in the nucleus. Its subcellular location is the cytoplasm. The enzyme catalyses L-seryl-[protein] + ATP = O-phospho-L-seryl-[protein] + ADP + H(+). The catalysed reaction is L-threonyl-[protein] + ATP = O-phospho-L-threonyl-[protein] + ADP + H(+). With respect to regulation, activation requires multiple phosphorylation events on serine/threonine residues. Activation appears to be first mediated by phosphorylation of multiple sites in the autoinhibitory domain, which facilitates phosphorylation at Thr-412, disrupting the autoinhibitory mechanism and allowing phosphorylation of Thr-252 by PDPK1. The active conformation of the kinase is believed to be stabilized by a mechanism involving three conserved phosphorylation sites located in the kinase domain activation loop (Thr-252) and in the AGC-kinase C-terminal domain (Ser-394 in the middle of the tail/linker region and Thr-412 within a hydrophobic motif at its end). Activated by mTORC1; isoform Alpha I and isoform Alpha II are sensitive to rapamycin, which inhibits activating phosphorylation at Thr-412. Activated by PDPK1. Serine/threonine-protein kinase that acts downstream of mTOR signaling in response to growth factors and nutrients to promote cell proliferation, cell growth and cell cycle progression. Regulates protein synthesis through phosphorylation of EIF4B, RPS6 and EEF2K, and contributes to cell survival by repressing the pro-apoptotic function of BAD. Under conditions of nutrient depletion, the inactive form associates with the EIF3 translation initiation complex. Upon mitogenic stimulation, phosphorylation by the mechanistic target of rapamycin complex 1 (mTORC1) leads to dissociation from the EIF3 complex and activation. The active form then phosphorylates and activates several substrates in the pre-initiation complex, including the EIF2B complex and the cap-binding complex component EIF4B. Also controls translation initiation by phosphorylating a negative regulator of EIF4A, PDCD4, targeting it for ubiquitination and subsequent proteolysis. Promotes initiation of the pioneer round of protein synthesis by phosphorylating POLDIP3/SKAR. In response to IGF1, activates translation elongation by phosphorylating EEF2 kinase (EEF2K), which leads to its inhibition and thus activation of EEF2. Also plays a role in feedback regulation of mTORC2 by mTORC1 by phosphorylating MAPKAP1/SIN1, MTOR and RICTOR, resulting in the inhibition of mTORC2 and AKT1 signaling. Also involved in feedback regulation of mTORC1 and mTORC2 by phosphorylating DEPTOR. Mediates cell survival by phosphorylating the pro-apoptotic protein BAD and suppressing its pro-apoptotic function. Phosphorylates mitochondrial URI1 leading to dissociation of a URI1-PPP1CC complex. The free mitochondrial PPP1CC can then dephosphorylate RPS6KB1 at Thr-412, which is proposed to be a negative feedback mechanism for the RPS6KB1 anti-apoptotic function. Mediates TNF-alpha-induced insulin resistance by phosphorylating IRS1 at multiple serine residues, resulting in accelerated degradation of IRS1. In cells lacking functional TSC1-2 complex, constitutively phosphorylates and inhibits GSK3B. May be involved in cytoskeletal rearrangement through binding to neurabin. Phosphorylates and activates the pyrimidine biosynthesis enzyme CAD, downstream of MTOR. Following activation by mTORC1, phosphorylates EPRS and thereby plays a key role in fatty acid uptake by adipocytes and also most probably in interferon-gamma-induced translation inhibition. The polypeptide is Ribosomal protein S6 kinase beta-1 (RPS6KB1) (Homo sapiens (Human)).